The primary structure comprises 475 residues: Ribulose bisphosphate carboxylase large chain (475 aa).

Positions 1–2 (MS) are excised as a propeptide. Position 3 is an N-acetylproline (Pro3). Lys14 bears the N6,N6,N6-trimethyllysine mark. Substrate contacts are provided by Asn123 and Thr173. The Proton acceptor role is filled by Lys175. Lys177 is a substrate binding site. Positions 201, 203, and 204 each coordinate Mg(2+). Residue Lys201 is modified to N6-carboxylysine. His294 serves as the catalytic Proton acceptor. Substrate-binding residues include Arg295, His327, and Ser379.

The protein belongs to the RuBisCO large chain family. Type I subfamily. Heterohexadecamer of 8 large chains and 8 small chains; disulfide-linked. The disulfide link is formed within the large subunit homodimers. Mg(2+) serves as cofactor. In terms of processing, the disulfide bond which can form in the large chain dimeric partners within the hexadecamer appears to be associated with oxidative stress and protein turnover.

The protein localises to the plastid. The protein resides in the chloroplast. It catalyses the reaction 2 (2R)-3-phosphoglycerate + 2 H(+) = D-ribulose 1,5-bisphosphate + CO2 + H2O. The enzyme catalyses D-ribulose 1,5-bisphosphate + O2 = 2-phosphoglycolate + (2R)-3-phosphoglycerate + 2 H(+). Its function is as follows. RuBisCO catalyzes two reactions: the carboxylation of D-ribulose 1,5-bisphosphate, the primary event in carbon dioxide fixation, as well as the oxidative fragmentation of the pentose substrate in the photorespiration process. Both reactions occur simultaneously and in competition at the same active site. The polypeptide is Ribulose bisphosphate carboxylase large chain (Corylus cornuta (Beaked hazel)).